An 883-amino-acid chain; its full sequence is Envelope glycoprotein B (883 aa).

Residues 1–31 form the signal peptide; sequence MQSYIAVNIDMASLKMLICVCVAILIPSTLS. Residues 32–750 are Virion surface-facing; the sequence is QDSHGIAGII…SGIASFLSNP (719 aa). Disulfide bonds link cysteine 77–cysteine 535, cysteine 94–cysteine 491, cysteine 167–cysteine 229, cysteine 321–cysteine 369, and cysteine 558–cysteine 608. Residues asparagine 102 and asparagine 121 are each glycosylated (N-linked (GlcNAc...) asparagine; by host). The tract at residues 134-140 is involved in fusion and/or binding to host membrane; the sequence is TWALFSR. Asparagine 211 carries an N-linked (GlcNAc...) asparagine; by host glycan. Residues 216 to 223 form an involved in fusion and/or binding to host membrane region; sequence HQTLGYRT. Residues asparagine 262 and asparagine 360 are each glycosylated (N-linked (GlcNAc...) asparagine; by host). Residues 428 to 457 form a disordered region; it reads QNHLPRGRERRQAAGRRTASLQSGPQGDRI. N-linked (GlcNAc...) asparagine; by host glycans are attached at residues asparagine 579, asparagine 635, and asparagine 649. 2 hydrophobic membrane proximal region regions span residues 694 to 748 and 724 to 744; these read IDTV…SFLS and ALGTVVMTAAAAVISTVSGIA. The helical transmembrane segment at 751 to 771 threads the bilayer; it reads FAALGIGIAVVVSIILGLLAF. At 772–883 the chain is on the intravirion side; sequence KYVMNLKSNP…PSWAEESEDE (112 aa). A disordered region spans residues 791 to 817; it reads PPAGTPPRPSRRYYKDEEEVEEDSDED. Residues 806–817 are compositionally biased toward acidic residues; the sequence is DEEEVEEDSDED. The Internalization motif motif lies at 868-871; sequence YPLL.

This sequence belongs to the herpesviridae glycoprotein B family. Homotrimer; disulfide-linked. Binds to heparan sulfate proteoglycans. Interacts with gH/gL heterodimer. In terms of processing, a proteolytic cleavage by host furin generates two subunits that remain linked by disulfide bonds.

Its subcellular location is the virion membrane. The protein localises to the host cell membrane. The protein resides in the host endosome membrane. It is found in the host Golgi apparatus membrane. Envelope glycoprotein that forms spikes at the surface of virion envelope. Essential for the initial attachment to heparan sulfate moieties of the host cell surface proteoglycans. Involved in fusion of viral and cellular membranes leading to virus entry into the host cell. Following initial binding to its host receptors, membrane fusion is mediated by the fusion machinery composed at least of gB and the heterodimer gH/gL. May be involved in the fusion between the virion envelope and the outer nuclear membrane during virion egress. The sequence is that of Envelope glycoprotein B from Gallus gallus (Chicken).